A 186-amino-acid chain; its full sequence is Serine hydrolase RBBP9 (186 aa).

The interval 63–67 is involved in binding to RB1; it reads LHCDE. Residues Ser75, Asp138, and His165 each act as charge relay system in the active site.

This sequence belongs to the RBBP9 family. As to quaternary structure, interacts with RB1; the interaction disrupts RB1 binding to E2F1. Interacts with RBL1 and RBL2. As to expression, expressed at higher levels in tumor tissues such as carcinoma.

It catalyses the reaction valacyclovir + H2O = acyclovir + L-valine + H(+). Its activity is regulated as follows. Inhibited by the natural product emetine produced by the ipecac root. In terms of biological role, serine hydrolase. Catalyzes the hydrolytic activation of amino acid ester of the antiviral prodrug valacyclovir to its corresponding active drug, acyclovir. May negatively regulate basal or autocrine TGF-beta signaling by suppressing SMAD2-SMAD3 phosphorylation. May play a role in the transformation process due to its capacity to confer resistance to the growth-inhibitory effects of TGF-beta through interaction with RB1 and the subsequent displacement of E2F1. This is Serine hydrolase RBBP9 from Homo sapiens (Human).